Consider the following 430-residue polypeptide: MANVVVVGAQWGDEGKGKIVDWLSEQADIVARFQGGHNAGHTLVINGETYKLALLPSGVLRPSKLAVIGNGVVFDPQAFLDEVERLTKQGVAISPENLRVAENVTLILPLHRELDALRENASKATAIGTTQRGIGPAYEDKVGRRAIRLMDLADIDTLPHKIERLLTHHNALRRGLGLAEFEAGAILKELTALAPKLLPYAETVWRLLDIKRREGKRILFEGAQGALLDVDHGTYPYVTSSNTVAAQAATGTGMGPGSVGYVLGICKAYTTRVGQGPFPTELDNEIGRKIGERGREFGTNTGRPRRCGWFDAVLVRQTVRTCGIHGLALTKLDILDGFEQIEVCVGYRLDGKEIDHLPAGEGAQARVEPIYETIEGWKEPTANARSWAELPAQAIKYVRRIEELVGCPVALLSTSPEREDTILVQNPFEA.

Residues 12–18 (GDEGKGK) and 40–42 (GHT) contribute to the GTP site. Aspartate 13 functions as the Proton acceptor in the catalytic mechanism. Residues aspartate 13 and glycine 40 each contribute to the Mg(2+) site. Residues 13–16 (DEGK), 38–41 (NAGH), threonine 130, arginine 144, glutamine 224, threonine 239, and arginine 303 each bind IMP. The active-site Proton donor is histidine 41. 299 to 305 (TNTGRPR) contacts substrate. Residues arginine 305, 331–333 (KLD), and 413–415 (STS) contribute to the GTP site.

Belongs to the adenylosuccinate synthetase family. Homodimer. Mg(2+) is required as a cofactor.

Its subcellular location is the cytoplasm. The catalysed reaction is IMP + L-aspartate + GTP = N(6)-(1,2-dicarboxyethyl)-AMP + GDP + phosphate + 2 H(+). Its pathway is purine metabolism; AMP biosynthesis via de novo pathway; AMP from IMP: step 1/2. Functionally, plays an important role in the de novo pathway of purine nucleotide biosynthesis. Catalyzes the first committed step in the biosynthesis of AMP from IMP. This is Adenylosuccinate synthetase from Rhodopseudomonas palustris (strain HaA2).